A 124-amino-acid polypeptide reads, in one-letter code: Tax1-binding protein 3 (124 aa).

Ser-2 is modified (N-acetylserine). The 98-residue stretch at 15-112 (RVEIHKLRQG…EVVRLLVTRQ (98 aa)) folds into the PDZ domain. Ser-61 is subject to Phosphoserine.

Interacts (via its PDZ domain) with GLS2. Interacts (via its PDZ domain) with RTKN (via the C-terminal region); this interaction facilitates Rho-mediated activation of the FOS serum response element (SRE). Interacts (via its PDZ domain) with CTNNB1; this interaction inhibits the transcriptional activity of CTNNB1. Interacts with HTLV-1 TAX protein. Interacts (via PDZ domain) with ARHGEF16. Interacts (via PDZ domain) with KCNJ4 (via C-terminus). Competes with LIN7A for KCNJ4 binding. Interacts with ADGRB2. In terms of tissue distribution, ubiquitous. Detected in brain, heart, kidney, lung, small intestine and skeletal muscle. Detected in various cell lines including HeLa. Weakly expressed in peripheral blood leukocytes.

It is found in the cytoplasm. The protein resides in the nucleus. The protein localises to the cell membrane. Functionally, may regulate a number of protein-protein interactions by competing for PDZ domain binding sites. Binds CTNNB1 and may thereby act as an inhibitor of the Wnt signaling pathway. Competes with LIN7A for KCNJ4 binding, and thereby promotes KCNJ4 internalization. May play a role in the Rho signaling pathway. May play a role in activation of CDC42 by the viral protein HPV16 E6. The protein is Tax1-binding protein 3 of Homo sapiens (Human).